Reading from the N-terminus, the 98-residue chain is Sm-like protein LSM8 (98 aa).

In terms of domain architecture, Sm spans 2–78 (AATTGLETLV…IGVIGELDEE (77 aa)).

It belongs to the snRNP Sm proteins family. As to quaternary structure, component of the heptameric LSM2-LSM8 complex that forms a seven-membered ring structure with a donut shape. The LSM subunits are arranged in the order LSM8, LSM2, LSM3, LSM6, LSM5, LSM7 and LSM4. LSM8 subunit interacts only with its two neighboring subunits, LSM2 and LSM4. Interacts with the prefoldin co-chaperone subunits PFD1, PFD2, PFD3, PFD4, PFD5 and PFD6. As to expression, expressed in roots, leaves, stems, flowers and siliques.

The protein resides in the nucleus. In terms of biological role, component of the nuclear LSM2-LSM8 complex which is involved splicing nuclear mRNAs. LSM2-LSM8 binds directly to the U6 small nuclear RNAs (snRNAs). LSM8 is essential for the formation of the nuclear LSM2-LSM8 complex involved in the accurate splicing of selected development-related mRNAs through the stabilization of the spliceosomal U6 snRNA. Plays a critical role in the regulation of development-related gene expression. This Arabidopsis thaliana (Mouse-ear cress) protein is Sm-like protein LSM8.